The primary structure comprises 381 residues: MKKISLLGATGSIGWQTYDILKEQREAFQLVAFSSGKNMEKTREMIDNLKPELVSVQLEEDALLLAKEYPTIHFTFGAQGLVEVATHPASTVLVNAVLGSVGLESTLAAIRMGKTIAIANKETLVTAGHLVMAEAKKYNATILPVDSEHSAIFQSMNGENPKDIERLIITASGGSFRDKTRDQLKHVTVADALNHPNWSMGAKITIDSATMMNKGLEVIEAHVLFDMPYEKIDVLLHRESIIHSLVEYHDTSVIAQLGTPDMRVPIQYALSYPDRIPLHNGQRLNLAQIGQLHFQEMDFERYPALRLAYEAGRTGGTILTAMNAANEAAVAAFLQGKITFLQIDETIERVMQAHQNIAIPDLQTILQVDSETRKIVLDMVK.

NADPH-binding residues include Thr10, Gly11, Ser12, Ile13, Gly36, Lys37, Asn38, and Asn120. Lys121 lines the 1-deoxy-D-xylulose 5-phosphate pocket. Glu122 lines the NADPH pocket. Asp146 contributes to the Mn(2+) binding site. Residues Ser147, Glu148, Ser172, and His195 each coordinate 1-deoxy-D-xylulose 5-phosphate. Position 148 (Glu148) interacts with Mn(2+). Gly201 contributes to the NADPH binding site. 1-deoxy-D-xylulose 5-phosphate-binding residues include Ser208, Asn213, Lys214, and Glu217. Glu217 is a Mn(2+) binding site.

The protein belongs to the DXR family. Mg(2+) serves as cofactor. Mn(2+) is required as a cofactor.

The catalysed reaction is 2-C-methyl-D-erythritol 4-phosphate + NADP(+) = 1-deoxy-D-xylulose 5-phosphate + NADPH + H(+). It participates in isoprenoid biosynthesis; isopentenyl diphosphate biosynthesis via DXP pathway; isopentenyl diphosphate from 1-deoxy-D-xylulose 5-phosphate: step 1/6. Functionally, catalyzes the NADPH-dependent rearrangement and reduction of 1-deoxy-D-xylulose-5-phosphate (DXP) to 2-C-methyl-D-erythritol 4-phosphate (MEP). The sequence is that of 1-deoxy-D-xylulose 5-phosphate reductoisomerase from Lysinibacillus sphaericus (strain C3-41).